Consider the following 216-residue polypeptide: Probable transaldolase (216 aa).

K85 serves as the catalytic Schiff-base intermediate with substrate.

It belongs to the transaldolase family. Type 3B subfamily.

It is found in the cytoplasm. The enzyme catalyses D-sedoheptulose 7-phosphate + D-glyceraldehyde 3-phosphate = D-erythrose 4-phosphate + beta-D-fructose 6-phosphate. It participates in carbohydrate degradation; pentose phosphate pathway; D-glyceraldehyde 3-phosphate and beta-D-fructose 6-phosphate from D-ribose 5-phosphate and D-xylulose 5-phosphate (non-oxidative stage): step 2/3. Its function is as follows. Transaldolase is important for the balance of metabolites in the pentose-phosphate pathway. The sequence is that of Probable transaldolase from Dehalococcoides mccartyi (strain ATCC BAA-2266 / KCTC 15142 / 195) (Dehalococcoides ethenogenes (strain 195)).